A 301-amino-acid polypeptide reads, in one-letter code: Glutamine amidotransferase-like protein GlxB (301 aa).

Cys-2 is a catalytic residue. The region spanning 2 to 298 is the Glutamine amidotransferase type-2 domain; the sequence is CGIVGLFLKD…PATVYFWDHQ (297 aa).

This is Glutamine amidotransferase-like protein GlxB (glxB) from Rhizobium meliloti (strain 1021) (Ensifer meliloti).